Consider the following 244-residue polypeptide: 5-oxoprolinase subunit A (244 aa).

Belongs to the LamB/PxpA family. Forms a complex composed of PxpA, PxpB and PxpC.

It catalyses the reaction 5-oxo-L-proline + ATP + 2 H2O = L-glutamate + ADP + phosphate + H(+). In terms of biological role, catalyzes the cleavage of 5-oxoproline to form L-glutamate coupled to the hydrolysis of ATP to ADP and inorganic phosphate. The polypeptide is 5-oxoprolinase subunit A (Escherichia coli (strain SMS-3-5 / SECEC)).